Consider the following 320-residue polypeptide: Aspartate carbamoyltransferase catalytic subunit (320 aa).

Carbamoyl phosphate is bound by residues arginine 53 and threonine 54. Residue lysine 82 participates in L-aspartate binding. 3 residues coordinate carbamoyl phosphate: arginine 103, histidine 131, and glutamine 134. The L-aspartate site is built by arginine 164 and arginine 227. 2 residues coordinate carbamoyl phosphate: leucine 266 and proline 267.

Belongs to the aspartate/ornithine carbamoyltransferase superfamily. ATCase family. As to quaternary structure, heterododecamer (2C3:3R2) of six catalytic PyrB chains organized as two trimers (C3), and six regulatory PyrI chains organized as three dimers (R2).

It carries out the reaction carbamoyl phosphate + L-aspartate = N-carbamoyl-L-aspartate + phosphate + H(+). The protein operates within pyrimidine metabolism; UMP biosynthesis via de novo pathway; (S)-dihydroorotate from bicarbonate: step 2/3. Catalyzes the condensation of carbamoyl phosphate and aspartate to form carbamoyl aspartate and inorganic phosphate, the committed step in the de novo pyrimidine nucleotide biosynthesis pathway. The polypeptide is Aspartate carbamoyltransferase catalytic subunit (Bifidobacterium longum (strain NCC 2705)).